Here is a 322-residue protein sequence, read N- to C-terminus: Triosephosphate isomerase, chloroplastic (322 aa).

The N-terminal 67 residues, 1–67, are a transit peptide targeting the chloroplast; it reads MAVVSTSLAS…RRCPRGVVAM (67 aa). Positions 78 and 80 each coordinate substrate. H162 (electrophile) is an active-site residue. The active-site Proton acceptor is the E232.

Belongs to the triosephosphate isomerase family. Homodimer.

It is found in the plastid. The protein resides in the chloroplast. It carries out the reaction D-glyceraldehyde 3-phosphate = dihydroxyacetone phosphate. It functions in the pathway carbohydrate biosynthesis; Calvin cycle. This is Triosephosphate isomerase, chloroplastic (TPIP1) from Spinacia oleracea (Spinach).